We begin with the raw amino-acid sequence, 240 residues long: 1-(5-phosphoribosyl)-5-[(5-phosphoribosylamino)methylideneamino] imidazole-4-carboxamide isomerase (240 aa).

The Proton acceptor role is filled by D9. The active-site Proton donor is the D131.

The protein belongs to the HisA/HisF family.

It localises to the cytoplasm. It catalyses the reaction 1-(5-phospho-beta-D-ribosyl)-5-[(5-phospho-beta-D-ribosylamino)methylideneamino]imidazole-4-carboxamide = 5-[(5-phospho-1-deoxy-D-ribulos-1-ylimino)methylamino]-1-(5-phospho-beta-D-ribosyl)imidazole-4-carboxamide. The protein operates within amino-acid biosynthesis; L-histidine biosynthesis; L-histidine from 5-phospho-alpha-D-ribose 1-diphosphate: step 4/9. The protein is 1-(5-phosphoribosyl)-5-[(5-phosphoribosylamino)methylideneamino] imidazole-4-carboxamide isomerase of Azobacteroides pseudotrichonymphae genomovar. CFP2.